A 1762-amino-acid polypeptide reads, in one-letter code: Non-reducing polyketide synthase PKS8-1 (1762 aa).

The segment at 17-247 is N-terminal acylcarrier protein transacylase domain (SAT); sequence DIYRGLHNHS…ARYIELPVYG (231 aa). In terms of domain architecture, Ketosynthase family 3 (KS3) spans 385–819; sequence QSKLAITGIS…GGNTTMVLEE (435 aa). Catalysis depends on for beta-ketoacyl synthase activity residues Cys-558, His-694, and His-737. The segment at 920 to 1240 is malonyl-CoA:ACP transacylase (MAT) domain; that stretch reads FSFTGQGASH…MAALHLTGVA (321 aa). Positions 1308-1622 are product template (PT) domain; sequence TSTVQQVIAL…PRILLNRFFS (315 aa). Residues 1312–1448 are N-terminal hotdog fold; the sequence is QQVIALEVEG…GDANDWLSSW (137 aa). The PKS/mFAS DH domain occupies 1312–1618; the sequence is QQVIALEVEG…FRSYPRILLN (307 aa). The active-site Proton acceptor; for dehydratase activity is the His-1344. The segment at 1471–1618 is C-terminal hotdog fold; sequence ASRFTRNMAY…FRSYPRILLN (148 aa). Asp-1529 functions as the Proton donor; for dehydratase activity in the catalytic mechanism. Residues 1632–1689 are disordered; the sequence is RAGNAATVTPQVTIPKPPSSLKTPAPANPSRRDSGVESKPLPPPQPKQAPPSTDSENS. Positions 1671–1680 are enriched in pro residues; sequence PLPPPQPKQA. Residues 1685 to 1762 enclose the Carrier domain; that stretch reads DSENSTISKA…DMRRWLEEHY (78 aa). Ser-1722 is modified (O-(pantetheine 4'-phosphoryl)serine).

The catalysed reaction is holo-[ACP] + 8 malonyl-CoA + 8 H(+) = atrochrysone carboxyl-[ACP] + 8 CO2 + 8 CoA + 2 H2O. It functions in the pathway secondary metabolite biosynthesis. Non-reducing polyketide synthase; part of the gene cluster that mediates the biosynthesis of an emodin derivative that may be involved in black Sigatoka disease of banana. The pathway begins with the synthesis of atrochrysone thioester by the polyketide synthase PKS8-1. The atrochrysone carboxyl ACP thioesterase MYCFIDRAFT_190111 then breaks the thioester bond and releases the atrochrysone carboxylic acid from PKS8-1. The decarboxylase MYCFIDRAFT_34057 then catalyzes the concerted decarboxylation-elimination required to convert atochrysone carboxylic acid into emodin anthrone, which is further oxidized to emodin by the anthrone oxygenase MYCFIDRAFT_34418. The functions of the other tailoring enzymes as well as the final product of the cluster have still to be identified. This chain is Non-reducing polyketide synthase PKS8-1 (PKS8-1), found in Pseudocercospora fijiensis (strain CIRAD86) (Black leaf streak disease fungus).